Here is a 412-residue protein sequence, read N- to C-terminus: uncharacterized protein (412 aa).

Residues 1–17 (MPSQGNNKNSENITQNP) are compositionally biased toward polar residues. 3 disordered regions span residues 1–20 (MPSQGNNKNSENITQNPIEG), 223–243 (EQAVGQPIEQQSISDDEARQT), and 310–412 (QKQM…NPVA). Residues 340 to 355 (KLNSNTRGSSKRPSVN) show a composition bias toward polar residues. A compositionally biased stretch (gly residues) spans 361-379 (GQRGRGGRGFYRGGRGRGG). Positions 390-402 (SNSNNSTSQPSPN) are enriched in low complexity. Residues 403-412 (AELSNFNPVA) are compositionally biased toward polar residues.

This is an uncharacterized protein from Schizosaccharomyces pombe (strain 972 / ATCC 24843) (Fission yeast).